The sequence spans 283 residues: Thymidylate synthase (283 aa).

DUMP-binding positions include Arg31 and 145 to 146 (RR). Cys165 functions as the Nucleophile in the catalytic mechanism. Residues 185–188 (RSAD), Asn196, and 226–228 (HIY) each bind dUMP. A (6R)-5,10-methylene-5,6,7,8-tetrahydrofolate-binding site is contributed by Asp188. Ser282 contributes to the (6R)-5,10-methylene-5,6,7,8-tetrahydrofolate binding site.

It belongs to the thymidylate synthase family. Bacterial-type ThyA subfamily. Homodimer.

It is found in the cytoplasm. The enzyme catalyses dUMP + (6R)-5,10-methylene-5,6,7,8-tetrahydrofolate = 7,8-dihydrofolate + dTMP. It functions in the pathway pyrimidine metabolism; dTTP biosynthesis. Functionally, catalyzes the reductive methylation of 2'-deoxyuridine-5'-monophosphate (dUMP) to 2'-deoxythymidine-5'-monophosphate (dTMP) while utilizing 5,10-methylenetetrahydrofolate (mTHF) as the methyl donor and reductant in the reaction, yielding dihydrofolate (DHF) as a by-product. This enzymatic reaction provides an intracellular de novo source of dTMP, an essential precursor for DNA biosynthesis. In Symbiobacterium thermophilum (strain DSM 24528 / JCM 14929 / IAM 14863 / T), this protein is Thymidylate synthase.